We begin with the raw amino-acid sequence, 802 residues long: Oligophrenin-1 (802 aa).

The PH domain maps to 265–368; it reads QPTIEGYLYT…WMEAMDGKEP (104 aa). Residues 380–564 form the Rho-GAP domain; the sequence is MELNEVGFKF…ILIEHFGKIY (185 aa). Disordered regions lie at residues 569–589, 607–770, and 783–802; these read EESAAPPVPPPRVTARRHKPI, LDES…NAGE, and FETASRKTGSSQGRLPGDES. A compositionally biased stretch (polar residues) spans 616–627; the sequence is HQTPNGTITSSI. The segment covering 716–732 has biased composition (basic and acidic residues); sequence HHKEGDADSFSKVRPPG.

Interacts with HOMER1. Interacts with AMPA receptor complexes. Interacts with SH3GL2 (endophilin-A1). Interacts (via C-terminus) with NR1D1.

Its subcellular location is the postsynapse. The protein resides in the presynapse. It localises to the cell projection. It is found in the axon. The protein localises to the dendritic spine. Its subcellular location is the dendrite. The protein resides in the cytoplasm. Its function is as follows. Stimulates GTP hydrolysis of members of the Rho family. Its action on RHOA activity and signaling is implicated in growth and stabilization of dendritic spines, and therefore in synaptic function. Critical for the stabilization of AMPA receptors at postsynaptic sites. Critical for the regulation of synaptic vesicle endocytosis at pre-synaptic terminals. Required for the localization of NR1D1 to dendrites, can suppress its repressor activity and protect it from proteasomal degradation. The chain is Oligophrenin-1 (OPHN1) from Pan troglodytes (Chimpanzee).